The sequence spans 225 residues: Uracil-DNA glycosylase (225 aa).

Residue aspartate 61 is the Proton acceptor of the active site.

Belongs to the uracil-DNA glycosylase (UDG) superfamily. UNG family.

The protein localises to the cytoplasm. The catalysed reaction is Hydrolyzes single-stranded DNA or mismatched double-stranded DNA and polynucleotides, releasing free uracil.. In terms of biological role, excises uracil residues from the DNA which can arise as a result of misincorporation of dUMP residues by DNA polymerase or due to deamination of cytosine. This is Uracil-DNA glycosylase from Actinobacillus pleuropneumoniae serotype 5b (strain L20).